Reading from the N-terminus, the 273-residue chain is WIMGHMVNAIAQIDEFVNLGANSIETDVSFDDSANPEYTYHGVPCDCGRTCTKWEYFNEFLKGLRKATTPGDSKYHEKLVLVVFDLKTSSLYDNQASDAGKKLAKSLLQNYWNNGNNGGRAYIVLSIPNLAHYKLITGFKETLTSEGHPELMDKVGYGFSGNDEIGDVAKTYKKAGVTGHVWQSDGITNCLLRGLDRVRKAVANRDSSNGYINKVYYWIVDKRATTRDALDAGVDGIMTNYPDVIADVLNESAYKAKFRIASYDDNPWETFKN.

Residue His-5 is part of the active site. Glu-25 and Asp-27 together coordinate Mg(2+). His-41 serves as the catalytic Nucleophile. 2 cysteine pairs are disulfide-bonded: Cys-45-Cys-51 and Cys-47-Cys-190. Asp-85 serves as a coordination point for Mg(2+). N-linked (GlcNAc...) asparagine glycosylation is present at Asn-250.

Belongs to the arthropod phospholipase D family. Class II subfamily. Mg(2+) serves as cofactor. Expressed by the venom gland.

It localises to the secreted. It catalyses the reaction an N-(acyl)-sphingosylphosphocholine = an N-(acyl)-sphingosyl-1,3-cyclic phosphate + choline. It carries out the reaction an N-(acyl)-sphingosylphosphoethanolamine = an N-(acyl)-sphingosyl-1,3-cyclic phosphate + ethanolamine. The catalysed reaction is a 1-acyl-sn-glycero-3-phosphocholine = a 1-acyl-sn-glycero-2,3-cyclic phosphate + choline. The enzyme catalyses a 1-acyl-sn-glycero-3-phosphoethanolamine = a 1-acyl-sn-glycero-2,3-cyclic phosphate + ethanolamine. Functionally, dermonecrotic toxins cleave the phosphodiester linkage between the phosphate and headgroup of certain phospholipids (sphingolipid and lysolipid substrates), forming an alcohol (often choline) and a cyclic phosphate. This toxin acts on sphingomyelin (SM). It may also act on ceramide phosphoethanolamine (CPE), lysophosphatidylcholine (LPC) and lysophosphatidylethanolamine (LPE), but not on lysophosphatidylserine (LPS), and lysophosphatidylglycerol (LPG). It acts by transphosphatidylation, releasing exclusively cyclic phosphate products as second products. Induces dermonecrosis, hemolysis, increased vascular permeability, edema, inflammatory response, and platelet aggregation. The chain is Dermonecrotic toxin LdSicTox-alphaIB1aiv from Loxosceles deserta (Desert recluse spider).